A 157-amino-acid polypeptide reads, in one-letter code: Peptide methionine sulfoxide reductase MsrA (157 aa).

Cysteine 10 is an active-site residue.

It belongs to the MsrA Met sulfoxide reductase family.

It catalyses the reaction L-methionyl-[protein] + [thioredoxin]-disulfide + H2O = L-methionyl-(S)-S-oxide-[protein] + [thioredoxin]-dithiol. It carries out the reaction [thioredoxin]-disulfide + L-methionine + H2O = L-methionine (S)-S-oxide + [thioredoxin]-dithiol. In terms of biological role, has an important function as a repair enzyme for proteins that have been inactivated by oxidation. Catalyzes the reversible oxidation-reduction of methionine sulfoxide in proteins to methionine. The sequence is that of Peptide methionine sulfoxide reductase MsrA from Clostridium botulinum (strain Hall / ATCC 3502 / NCTC 13319 / Type A).